Reading from the N-terminus, the 256-residue chain is Small ribosomal subunit protein eS1 (256 aa).

Ala-2 is subject to N-acetylalanine; partial.

Belongs to the eukaryotic ribosomal protein eS1 family. In terms of assembly, component of the small ribosomal subunit. Mature ribosomes consist of a small (40S) and a large (60S) subunit. The 40S subunit contains about 33 different proteins and 1 molecule of RNA (18S). The 60S subunit contains about 49 different proteins and 3 molecules of RNA (25S, 5.8S and 5S).

It localises to the cytoplasm. The chain is Small ribosomal subunit protein eS1 from Laccaria bicolor (strain S238N-H82 / ATCC MYA-4686) (Bicoloured deceiver).